The sequence spans 216 residues: Somatotropin (216 aa).

Residues 1–26 form the signal peptide; that stretch reads MAADSQTSRLLTFTLLCLLWPQEAGA. His-45 contributes to the Zn(2+) binding site. A disulfide bridge links Cys-78 with Cys-189. Ser-131 bears the Phosphoserine mark. Glu-198 provides a ligand contact to Zn(2+). Cys-206 and Cys-214 are joined by a disulfide.

The protein belongs to the somatotropin/prolactin family.

The protein resides in the secreted. Functionally, plays an important role in growth control. Its major role in stimulating body growth is to stimulate the liver and other tissues to secrete IGF1. It stimulates both the differentiation and proliferation of myoblasts. It also stimulates amino acid uptake and protein synthesis in muscle and other tissues. The chain is Somatotropin (GH1) from Mesocricetus auratus (Golden hamster).